A 204-amino-acid chain; its full sequence is 3-dehydroquinate dehydratase (204 aa).

Residues S9, 30–32, and R57 each bind 3-dehydroquinate; that span reads ELR. Residue H108 is the Proton donor/acceptor of the active site. Catalysis depends on K133, which acts as the Schiff-base intermediate with substrate. 3-dehydroquinate is bound by residues R167, T186, and Q190.

This sequence belongs to the type-I 3-dehydroquinase family. As to quaternary structure, homodimer.

The enzyme catalyses 3-dehydroquinate = 3-dehydroshikimate + H2O. Its pathway is metabolic intermediate biosynthesis; chorismate biosynthesis; chorismate from D-erythrose 4-phosphate and phosphoenolpyruvate: step 3/7. In terms of biological role, involved in the third step of the chorismate pathway, which leads to the biosynthesis of aromatic amino acids. Catalyzes the cis-dehydration of 3-dehydroquinate (DHQ) and introduces the first double bond of the aromatic ring to yield 3-dehydroshikimate. This Metallosphaera sedula (strain ATCC 51363 / DSM 5348 / JCM 9185 / NBRC 15509 / TH2) protein is 3-dehydroquinate dehydratase.